The sequence spans 242 residues: MAAAAGEARRVLVYGGRGALGSRCVQAFRARNWWVASIDVQENEEASANVVVKMTDSFTEQADQVTAEVGKLLGTEKVDAILCVAGGWAGGNAKSKSLFKNCDLMWKQSVWTSTISSHLATKHLKEGGLLTLAGARAALDGTPGMIGYGMAKAAVHQLCQSLAGKSSGLPPGAAAVALLPVTLDTPVNRKSMPEADFSSWTPLEFLVETFHDWITEKNRPSSGSLIQVVTTEGKTELTAASP.

12-36 is a binding site for NADP(+); sequence LVYGGRGALGSRCVQAFRARNWWVA. An N6-succinyllysine mark is found at Lys71, Lys77, Lys94, and Lys100. The Proton acceptor role is filled by Tyr148.

The protein belongs to the short-chain dehydrogenases/reductases (SDR) family. Homodimer.

It catalyses the reaction 5,6,7,8-tetrahydropteridine + NAD(+) = 6,7-dihydropteridine + NADH + H(+). The catalysed reaction is 5,6,7,8-tetrahydropteridine + NADP(+) = 6,7-dihydropteridine + NADPH + H(+). Functionally, catalyzes the conversion of quinonoid dihydrobiopterin into tetrahydrobiopterin. This Bos taurus (Bovine) protein is Dihydropteridine reductase (QDPR).